The chain runs to 190 residues: Transcription factor E (190 aa).

Residues 4–87 form the HTH TFE/IIEalpha-type domain; that stretch reads KNKALLEIAK…YWHLETKRLP (84 aa). The tract at residues 170–190 is disordered; that stretch reads PSPKKEKKKTRAKAKRKTRKK. Residues 174-190 are compositionally biased toward basic residues; it reads KEKKKTRAKAKRKTRKK.

The protein belongs to the TFE family. As to quaternary structure, monomer. Interaction with RNA polymerase subunits RpoF and RpoE is necessary for Tfe stimulatory transcription activity. Able to interact with Tbp and RNA polymerase in the absence of DNA promoter. Interacts both with the preinitiation and elongation complexes.

Transcription factor that plays a role in the activation of archaeal genes transcribed by RNA polymerase. Facilitates transcription initiation by enhancing TATA-box recognition by TATA-box-binding protein (Tbp), and transcription factor B (Tfb) and RNA polymerase recruitment. Not absolutely required for transcription in vitro, but particularly important in cases where Tbp or Tfb function is not optimal. It dynamically alters the nucleic acid-binding properties of RNA polymerases by stabilizing the initiation complex and destabilizing elongation complexes. Seems to translocate with the RNA polymerase following initiation and acts by binding to the non template strand of the transcription bubble in elongation complexes. This Pyrococcus abyssi (strain GE5 / Orsay) protein is Transcription factor E.